The sequence spans 503 residues: MDFPVNTRRMAGRRGFFSQYTHHHLAAFLLTFFSYSLLHASRKSFSNVKVSVSSQWTPSDLNSSAYIVLPNETWNGNTLFPNTKSATLFLGLLDTIFLFAYAVGLFISGIIGDRLNMRLVLTFGMCSSAITMFVFGTLTEWLQFYNKIFYCLVWIVNGLLQSTGWPCVVAIMGNWFGKSGRGFVFGLWSACASVGNILGAFLASSVLKYGYEYAFLVTASVQFAGGIIIFFGLVTSPKELGLPDTGEGEMDRAAQEEGANKPLIGGNDEGDDESNYSIQSDDVVITPKAIGFMQACCLPGVLLYSLAYACLKLVNYSFFFWLPYYLSNNFKWKEAEADQLSIWYDIGGIVGGTVQGLISDLMKMRSPVLTVSLLLAVGALFGYSHSPNDKVMNAFIMSITGFFIGGPSNMISSAISADLGRQEMVRGSSEALATVTGIVDGTGSIGAAMGQFLVPLIQNSLNWMWVFYFFIFMICMTTVFMVPLIVRETRDWLRQRRSSRLER.

A helical membrane pass occupies residues 20 to 40 (YTHHHLAAFLLTFFSYSLLHA). N-linked (GlcNAc...) asparagine glycosylation is found at Asn-62 and Asn-71. The next 5 helical transmembrane spans lie at 87–107 (TLFL…GLFI), 119–139 (LVLT…GTLT), 152–172 (LVWI…VAIM), 183–203 (FVFG…AFLA), and 214–234 (AFLV…FGLV). N-linked (GlcNAc...) asparagine glycosylation is present at Asn-275. Transmembrane regions (helical) follow at residues 300-322 (GVLL…FFWL), 342-362 (IWYD…SDLM), 367-387 (PVLT…SHSP), 395-415 (FIMS…SSAI), 437-457 (GIVD…VPLI), and 466-486 (VFYF…PLIV).

It belongs to the major facilitator superfamily. Organophosphate:Pi antiporter (OPA) (TC 2.A.1.4) family.

The protein localises to the endoplasmic reticulum membrane. Its subcellular location is the lysosome membrane. Unlike the other SLC37 members, seems to lack glucose-6-phosphate antiporter activity. The polypeptide is Sugar phosphate exchanger 3 (slc37a3) (Xenopus laevis (African clawed frog)).